Here is an 825-residue protein sequence, read N- to C-terminus: Heterogeneous nuclear ribonucleoprotein U (825 aa).

Residue Ser-2 is modified to N-acetylserine; partial. A Phosphoserine modification is found at Ser-4. The SAP domain maps to 8-42 (VKKLKVSELKEELKKRRLSDKGLKAELMERLQAAL). An N6-acetyllysine mark is found at Lys-17 and Lys-21. The tract at residues 41 to 281 (ALDDEEAGGR…PQPPVEEEDE (241 aa)) is disordered. Phosphoserine; by PLK1 is present on Ser-59. Residue Ser-66 is modified to Phosphoserine. Positions 72–81 (AGLEQEAAAG) are enriched in low complexity. 3 stretches are compositionally biased toward acidic residues: residues 82–95 (GDEEEEEEEEEEEG), 120–134 (PMEEEEAASEDENGD), and 140–153 (EGEDELGDEEEGAG). The segment covering 159–178 (GEQQPQPPATQQQQPQQQRG) has biased composition (low complexity). Lys-186 is modified (N6-acetyllysine). ADP-ribosylserine is present on Ser-187. Residues 199-211 (APPGARQGQQQAG) show a composition bias toward low complexity. Lys-215 is modified (N6-acetyllysine). Positions 233–266 (GKTEQKGGDKKRGVKRPREDHGRGYFEYIEENKY) are enriched in basic and acidic residues. At Arg-255 the chain carries Citrulline. Residue Lys-265 is modified to N6-acetyllysine; alternate. A Glycyl lysine isopeptide (Lys-Gly) (interchain with G-Cter in SUMO1); alternate cross-link involves residue Lys-265. A Glycyl lysine isopeptide (Lys-Gly) (interchain with G-Cter in SUMO2); alternate cross-link involves residue Lys-265. Tyr-266 carries the phosphotyrosine modification. Phosphoserine occurs at positions 267 and 271. The B30.2/SPRY domain occupies 267–464 (SRAKSPQPPV…VEFNFGQKEK (198 aa)). Thr-286 bears the Phosphothreonine mark. Residue Lys-352 is modified to N6-acetyllysine. The interval 488-672 (PKGPEEKKDC…QKLLEQYKEE (185 aa)) is ATPase domain. A Glycyl lysine isopeptide (Lys-Gly) (interchain with G-Cter in SUMO2) cross-link involves residue Lys-495. An ATP-binding site is contributed by 504 to 511 (GLPGAGKT). 2 positions are modified to N6-acetyllysine; alternate: Lys-516 and Lys-524. Glycyl lysine isopeptide (Lys-Gly) (interchain with G-Cter in SUMO2); alternate cross-links involve residues Lys-516 and Lys-524. A Phosphothreonine modification is found at Thr-532. A Glycyl lysine isopeptide (Lys-Gly) (interchain with G-Cter in SUMO2) cross-link involves residue Lys-536. N6-acetyllysine is present on Lys-551. The residue at position 565 (Lys-565) is an N6-acetyllysine; alternate. Residue Lys-565 forms a Glycyl lysine isopeptide (Lys-Gly) (interchain with G-Cter in SUMO2); alternate linkage. Residue Lys-574 forms a Glycyl lysine isopeptide (Lys-Gly) (interchain with G-Cter in SUMO2) linkage. Phosphothreonine is present on Thr-582. Glycyl lysine isopeptide (Lys-Gly) (interchain with G-Cter in SUMO2) cross-links involve residues Lys-609 and Lys-626. Residues 611-626 (EDYKQRTQKKAEVEGK) are actin-binding. At Lys-635 the chain carries N6-acetyllysine; alternate. A Glycyl lysine isopeptide (Lys-Gly) (interchain with G-Cter in SUMO2); alternate cross-link involves residue Lys-635. Glycyl lysine isopeptide (Lys-Gly) (interchain with G-Cter in SUMO2) cross-links involve residues Lys-664 and Lys-670. The segment covering 671–683 (EESKKALPPEKKQ) has biased composition (basic and acidic residues). Residues 671–749 (EESKKALPPE…GGGGGGSGGI (79 aa)) form a disordered region. The residue at position 702 (Arg-702) is an Omega-N-methylarginine. A compositionally biased stretch (gly residues) spans 710-728 (GGFNMRGGNFRGGAPGNRG). An RNA-binding RGG-box region spans residues 714 to 739 (MRGGNFRGGAPGNRGGYNRRGNMPQR). Residues Arg-715, Arg-720, and Arg-727 each carry the asymmetric dimethylarginine modification. Asymmetric dimethylarginine; alternate occurs at positions 733 and 739. Omega-N-methylarginine; alternate is present on residues Arg-733 and Arg-739. Arg-739 is subject to Dimethylated arginine; in A2780 ovarian carcinoma cell line. The span at 739-749 (RGGGGGGSGGI) shows a compositional bias: gly residues. An asymmetric dimethylarginine mark is found at Arg-755 and Arg-762. The tract at residues 769-799 (GNYNRGGMPNRGNYNQNFRGRGNNRGYKNQS) is disordered. Over residues 778-799 (NRGNYNQNFRGRGNNRGYKNQS) the composition is skewed to low complexity. The residue at position 814 (Lys-814) is an N6-acetyllysine; alternate. A Glycyl lysine isopeptide (Lys-Gly) (interchain with G-Cter in SUMO2); alternate cross-link involves residue Lys-814.

Oligomer (via ATPase domain and RNA-binding RGG-box region); oligomerization occurs upon ATP-binding in a chromatin-associated RNAs (caRNAs)- and transcription-dependent manner and is required for chromatin decompaction. ATP hydrolysis is required to cycle from an oligomeric to monomeric state to compact chromatin. Component of the coding region determinant (CRD)-mediated complex, composed of DHX9, HNRNPU, IGF2BP1, SYNCRIP and YBX1. Identified in the spliceosome C complex. Identified in a IGF2BP1-dependent mRNP granule complex containing untranslated mRNAs. Associates with heterogeneous nuclear ribonucleoprotein (hnRNP) particles. Associates (via middle region) with the C-terminal domain (CTD) RNA polymerase II (Pol II) holoenzyme; this association occurs in a RNA-independent manner. Associates (via middle region) with the core-TFIIH basal transcription factor complex; this association inhibits the CTD phosphorylation of RNA polymerase II holoenzyme by down-regulating TFIIH kinase activity. Associates with the telomerase holoenzyme complex. Associates with spindle microtubules (MTs) in a TPX2-dependent manner. Interacts (via C-terminus) with actin; this interaction is direct and mediates association with the phosphorylated CTD of RNA polymerase II and is disrupted in presence of the long non-coding H19 RNA. Interacts with AURKA. Interacts (via C-terminus) with CBX5; this interaction is, at least in part, RNA-dependent. Interacts with CR2. Interacts with CRY1. Interacts (via C-terminus) with EP300; this interaction enhances DNA-binding to nuclear scaffold/matrix attachment region (S/MAR) elements. Interacts with ERBB4. Interacts with GEMIN5. Interacts with IGF2BP1. Interacts with IGF2BP2 and IGF2BP3. Interacts with NCL; this interaction occurs during mitosis. Interacts (via C-terminus) with NR3C1 (via C-terminus). Interacts with PLK1; this interaction induces phosphorylation of HNRNPU at Ser-59 in mitosis. Interacts with POU3F4. Interacts with SMARCA4; this interaction occurs in embryonic stem cells and stimulates global Pol II-mediated transcription. Interacts (via C-terminus) with TOP2A; this interaction protects the topoisomerase TOP2A from degradation and positively regulates the relaxation of supercoiled DNA by TOP2A in a RNA-dependent manner. Interacts with TPX2; this interaction recruits HNRNPU to spindle microtubules (MTs). Interacts with UBQLN2. Interacts (via RNA-binding RGG-box region) with ZBTB7B; the interaction facilitates the recruitment of long non-coding RNA Blnc1 by ZBTB7B. Interacts with ERCC6. In terms of assembly, (Microbial infection) Interacts with HIV-1 protein Rev. In terms of processing, cleaved at Asp-100 by CASP3 during T-cell apoptosis, resulting in a loss of DNA- and chromatin-binding activities. Extensively phosphorylated. Phosphorylated on Ser-59 by PLK1 and dephosphorylated by protein phosphatase 2A (PP2A) in mitosis. Post-translationally, arg-739 is dimethylated, probably to asymmetric dimethylarginine. Arg-733 is dimethylated, probably to asymmetric dimethylarginine. In terms of processing, citrullinated by PADI4. Widely expressed.

The protein resides in the nucleus. It localises to the nucleus matrix. It is found in the chromosome. Its subcellular location is the nucleus speckle. The protein localises to the cytoplasm. The protein resides in the cytoskeleton. It localises to the microtubule organizing center. It is found in the centrosome. Its subcellular location is the centromere. The protein localises to the kinetochore. The protein resides in the spindle. It localises to the spindle pole. It is found in the midbody. Its subcellular location is the cell surface. The protein localises to the cytoplasmic granule. In terms of biological role, DNA- and RNA-binding protein involved in several cellular processes such as nuclear chromatin organization, telomere-length regulation, transcription, mRNA alternative splicing and stability, Xist-mediated transcriptional silencing and mitotic cell progression. Plays a role in the regulation of interphase large-scale gene-rich chromatin organization through chromatin-associated RNAs (caRNAs) in a transcription-dependent manner, and thereby maintains genomic stability. Required for the localization of the long non-coding Xist RNA on the inactive chromosome X (Xi) and the subsequent initiation and maintenance of X-linked transcriptional gene silencing during X-inactivation. Plays a role as a RNA polymerase II (Pol II) holoenzyme transcription regulator. Promotes transcription initiation by direct association with the core-TFIIH basal transcription factor complex for the assembly of a functional pre-initiation complex with Pol II in a actin-dependent manner. Blocks Pol II transcription elongation activity by inhibiting the C-terminal domain (CTD) phosphorylation of Pol II and dissociates from Pol II pre-initiation complex prior to productive transcription elongation. Positively regulates CBX5-induced transcriptional gene silencing and retention of CBX5 in the nucleus. Negatively regulates glucocorticoid-mediated transcriptional activation. Key regulator of transcription initiation and elongation in embryonic stem cells upon leukemia inhibitory factor (LIF) signaling. Involved in the long non-coding RNA H19-mediated Pol II transcriptional repression. Participates in the circadian regulation of the core clock component BMAL1 transcription. Plays a role in the regulation of telomere length. Plays a role as a global pre-mRNA alternative splicing modulator by regulating U2 small nuclear ribonucleoprotein (snRNP) biogenesis. Plays a role in mRNA stability. Component of the CRD-mediated complex that promotes MYC mRNA stabilization. Enhances the expression of specific genes, such as tumor necrosis factor TNFA, by regulating mRNA stability, possibly through binding to the 3'-untranslated region (UTR). Plays a role in mitotic cell cycle regulation. Involved in the formation of stable mitotic spindle microtubules (MTs) attachment to kinetochore, spindle organization and chromosome congression. Phosphorylation at Ser-59 by PLK1 is required for chromosome alignement and segregation and progression through mitosis. Also contributes to the targeting of AURKA to mitotic spindle MTs. Binds to double- and single-stranded DNA and RNA, poly(A), poly(C) and poly(G) oligoribonucleotides. Binds to chromatin-associated RNAs (caRNAs). Associates with chromatin to scaffold/matrix attachment region (S/MAR) elements in a chromatin-associated RNAs (caRNAs)-dependent manner. Binds to the Xist RNA. Binds the long non-coding H19 RNA. Binds to SMN1/2 pre-mRNAs at G/U-rich regions. Binds to small nuclear RNAs (snRNAs). Binds to the 3'-UTR of TNFA mRNA. Binds (via RNA-binding RGG-box region) to the long non-coding Xist RNA; this binding is direct and bridges the Xist RNA and the inactive chromosome X (Xi). Also negatively regulates embryonic stem cell differentiation upon LIF signaling. Required for embryonic development. Binds to brown fat long non-coding RNA 1 (Blnc1); facilitates the recruitment of Blnc1 by ZBTB7B required to drive brown and beige fat development and thermogenesis. (Microbial infection) Negatively regulates immunodeficiency virus type 1 (HIV-1) replication by preventing the accumulation of viral mRNA transcripts in the cytoplasm. This is Heterogeneous nuclear ribonucleoprotein U from Homo sapiens (Human).